The following is a 271-amino-acid chain: Na(+), Li(+), K(+)/H(+) antiporter subunit B (271 aa).

A run of 7 helical transmembrane segments spans residues 2 to 22, 36 to 56, 94 to 114, 130 to 150, 152 to 172, 193 to 213, and 216 to 236; these read ILLT…AIIF, LPQV…FLVG, WVYL…PSLI, PFML…LGTW, IVMG…VIIQ, STIT…SIPG, and ALMD…ITVM. The disordered stretch occupies residues 252-271; sequence TPHLSYSKAPPPSKGDNNAL.

The protein belongs to the UmpA/UmpB family. Heterodimer composed of UmpA and UmpB.

It localises to the cell membrane. Functionally, part of a two-component antiporter that catalyzes the efflux of Na(+), Li(+) and K(+) in exchange for external protons. Shows a preference for Na(+), followed by K(+) and Li(+). This Vreelandella zhaodongensis (Halomonas zhaodongensis) protein is Na(+), Li(+), K(+)/H(+) antiporter subunit B.